The sequence spans 493 residues: Lysine--tRNA ligase (493 aa).

The short motif at proline 26–asparagine 34 is the 'HIGH' region element. A 'KMSKS' region motif is present at residues alanine 270 to serine 274.

Belongs to the class-I aminoacyl-tRNA synthetase family.

It is found in the cytoplasm. The catalysed reaction is tRNA(Lys) + L-lysine + ATP = L-lysyl-tRNA(Lys) + AMP + diphosphate. This Archaeoglobus fulgidus (strain ATCC 49558 / DSM 4304 / JCM 9628 / NBRC 100126 / VC-16) protein is Lysine--tRNA ligase (lysS).